A 139-amino-acid chain; its full sequence is Nucleoside diphosphate kinase (139 aa).

The ATP site is built by K10, F58, R86, T92, R103, and N113. The active-site Pros-phosphohistidine intermediate is the H116.

The protein belongs to the NDK family. In terms of assembly, homotetramer. It depends on Mg(2+) as a cofactor.

It localises to the cytoplasm. It catalyses the reaction a 2'-deoxyribonucleoside 5'-diphosphate + ATP = a 2'-deoxyribonucleoside 5'-triphosphate + ADP. The catalysed reaction is a ribonucleoside 5'-diphosphate + ATP = a ribonucleoside 5'-triphosphate + ADP. In terms of biological role, major role in the synthesis of nucleoside triphosphates other than ATP. The ATP gamma phosphate is transferred to the NDP beta phosphate via a ping-pong mechanism, using a phosphorylated active-site intermediate. In Nitratidesulfovibrio vulgaris (strain ATCC 29579 / DSM 644 / CCUG 34227 / NCIMB 8303 / VKM B-1760 / Hildenborough) (Desulfovibrio vulgaris), this protein is Nucleoside diphosphate kinase.